Reading from the N-terminus, the 437-residue chain is UDP-sugar transporter protein SLC35A5 (437 aa).

The Cytoplasmic segment spans residues 1–21 (MKVIFLRQLKTRGMERKCSRR). Residues 22–42 (PGLGPPTLYTFLLGIIFITLS) traverse the membrane as a helical segment. Residues 43–65 (SSRILLVKYSANEENKYDYLPTT) lie on the Lumenal side of the membrane. The helical transmembrane segment at 66-86 (VNVCSELMKLILCILVSLCVI) threads the bilayer. Residues 87-106 (KKEDHQSRHLRCTSWKEFSS) lie on the Cytoplasmic side of the membrane. Residues 107–129 (FMKWSIPAFLYFLDNLIVFYVLS) traverse the membrane as a helical segment. Residues 130 to 132 (YLQ) lie on the Lumenal side of the membrane. The helical transmembrane segment at 133 to 155 (PAMAVIFSNFSIITTALLFRIVL) threads the bilayer. Topologically, residues 156 to 158 (KRH) are cytoplasmic. The helical transmembrane segment at 159–179 (LNWIQWASLLILFLSIVALTA) threads the bilayer. The Lumenal segment spans residues 180-241 (STKTSQHELA…TTARVFSHIR (62 aa)). The N-linked (GlcNAc...) asparagine glycan is linked to N217. Residues 242 to 262 (LGLGHVLIIVQCFISSMANIY) traverse the membrane as a helical segment. Residues 263 to 276 (NEKILKEGTQLTES) lie on the Cytoplasmic side of the membrane. The helical transmembrane segment at 277-297 (IFIQNSKLYFFGIVFNGLTLV) threads the bilayer. Topologically, residues 298–316 (LQSSNRDQIQNCGFFYGHN) are lumenal. The helical transmembrane segment at 317 to 337 (AFSVVLIFVTAFQGLSVAFIL) threads the bilayer. The Cytoplasmic segment spans residues 338 to 343 (KFLDNM). Residues 344-364 (FHVLMAQVTTVIITTVSVLVF) form a helical membrane-spanning segment. At 365–367 (DFR) the chain is on the lumenal side. The chain crosses the membrane as a helical span at residues 368 to 388 (PSLDFFLEAPSVLLSIFIYNA). Topologically, residues 389 to 437 (SKPQNLECAPKQERIRHLSGSLWERSSGDGEELERLTKLKSDDSDDDTL) are cytoplasmic. Phosphoserine occurs at positions 407, 429, and 432. The interval 412–437 (ERSSGDGEELERLTKLKSDDSDDDTL) is disordered. Over residues 421 to 430 (LERLTKLKSD) the composition is skewed to basic and acidic residues.

It belongs to the nucleotide-sugar transporter family. SLC35A subfamily. In terms of assembly, probably forms homooligomers and heterooligomers with SLC35A1, SLC35A2, SLC35A3 and SLC35A4.

The protein resides in the golgi apparatus membrane. It carries out the reaction UMP(out) + UDP-alpha-D-glucuronate(in) = UMP(in) + UDP-alpha-D-glucuronate(out). The catalysed reaction is UMP(out) + UDP-N-acetyl-alpha-D-glucosamine(in) = UMP(in) + UDP-N-acetyl-alpha-D-glucosamine(out). It catalyses the reaction UDP-N-acetyl-alpha-D-galactosamine(in) + UMP(out) = UDP-N-acetyl-alpha-D-galactosamine(out) + UMP(in). In terms of biological role, probable UDP-sugar:UMP transmembrane antiporter involved in UDP-alpha-D-glucuronate/UDP-GlcA, UDP-GlcNAc/UDP-N-acetyl-alpha-D-glucosamine and UDP-N-acetyl-alpha-D-galactosamine/UDP-GalNAc transport from the cytosol to the lumen of the Golgi. The protein is UDP-sugar transporter protein SLC35A5 of Mus musculus (Mouse).